The primary structure comprises 349 residues: tRNA pseudouridine synthase D (349 aa).

The Nucleophile role is filled by D77. The TRUD domain maps to 151-309 (GVPNYFGEQR…ETIDESTLKL (159 aa)).

Belongs to the pseudouridine synthase TruD family.

The catalysed reaction is uridine(13) in tRNA = pseudouridine(13) in tRNA. Functionally, responsible for synthesis of pseudouridine from uracil-13 in transfer RNAs. The protein is tRNA pseudouridine synthase D of Pseudoalteromonas translucida (strain TAC 125).